We begin with the raw amino-acid sequence, 412 residues long: Serine hydroxymethyltransferase (412 aa).

Residues Leu-120 and 124 to 126 (GHL) contribute to the (6S)-5,6,7,8-tetrahydrofolate site. Lys-229 carries the post-translational modification N6-(pyridoxal phosphate)lysine. Residue 352–354 (SPF) participates in (6S)-5,6,7,8-tetrahydrofolate binding.

This sequence belongs to the SHMT family. In terms of assembly, homodimer. Pyridoxal 5'-phosphate is required as a cofactor.

The protein localises to the cytoplasm. The catalysed reaction is (6R)-5,10-methylene-5,6,7,8-tetrahydrofolate + glycine + H2O = (6S)-5,6,7,8-tetrahydrofolate + L-serine. The protein operates within one-carbon metabolism; tetrahydrofolate interconversion. Its pathway is amino-acid biosynthesis; glycine biosynthesis; glycine from L-serine: step 1/1. In terms of biological role, catalyzes the reversible interconversion of serine and glycine with tetrahydrofolate (THF) serving as the one-carbon carrier. This reaction serves as the major source of one-carbon groups required for the biosynthesis of purines, thymidylate, methionine, and other important biomolecules. Also exhibits THF-independent aldolase activity toward beta-hydroxyamino acids, producing glycine and aldehydes, via a retro-aldol mechanism. The polypeptide is Serine hydroxymethyltransferase (Ruminiclostridium cellulolyticum (strain ATCC 35319 / DSM 5812 / JCM 6584 / H10) (Clostridium cellulolyticum)).